Reading from the N-terminus, the 142-residue chain is Large ribosomal subunit protein uL29 (142 aa).

The protein belongs to the universal ribosomal protein uL29 family.

The polypeptide is Large ribosomal subunit protein uL29 (RPL35) (Theileria annulata).